Consider the following 258-residue polypeptide: Uroplakin-1a (258 aa).

The Cytoplasmic portion of the chain corresponds to 1–14 (MASAAAATTEKGSP). The chain crosses the membrane as a helical span at residues 15–35 (VVVGLLVMGNIIILLSGLALF). Residues 36–59 (AETVWVTADQYRIYPLMGVSGKDD) lie on the Extracellular side of the membrane. The helical transmembrane segment at 60–86 (VFAGAWIAIFCGFSFFVVASFGVGAAL) threads the bilayer. Topologically, residues 87-91 (CRRRS) are cytoplasmic. A helical transmembrane segment spans residues 92–112 (MILTYLILMLIIYIFECASCI). Over 113 to 230 (TSYTHRDYMV…HIGHAIDSYT (118 aa)) the chain is Extracellular. The N-linked (GlcNAc...) asparagine glycan is linked to Asn-170. A helical transmembrane segment spans residues 231 to 252 (WGISWFGFAILMWTLPVMLIAM). The Cytoplasmic segment spans residues 253–258 (YFYTTL).

The protein belongs to the tetraspanin (TM4SF) family. As to quaternary structure, homodimer; disulfide-linked. Interacts with uroplakin-2 (UPK2). Post-translationally, the N-terminus is blocked. N-glycosylated with high-mannose oligosaccharides. As to expression, bladder epithelium.

The protein localises to the membrane. Its function is as follows. Component of the asymmetric unit membrane (AUM); a highly specialized biomembrane elaborated by terminally differentiated urothelial cells. May play an important role in normal bladder epithelial physiology, possibly in regulating membrane permeability of superficial umbrella cells or in stabilizing the apical membrane through AUM/cytoskeletal interactions. The chain is Uroplakin-1a (UPK1A) from Bos taurus (Bovine).